We begin with the raw amino-acid sequence, 81 residues long: Large ribosomal subunit protein uL24 (81 aa).

It belongs to the universal ribosomal protein uL24 family. Part of the 50S ribosomal subunit.

Functionally, one of two assembly initiator proteins, it binds directly to the 5'-end of the 23S rRNA, where it nucleates assembly of the 50S subunit. Its function is as follows. One of the proteins that surrounds the polypeptide exit tunnel on the outside of the subunit. The polypeptide is Large ribosomal subunit protein uL24 (Chloroherpeton thalassium (strain ATCC 35110 / GB-78)).